A 108-amino-acid chain; its full sequence is Tetrahydromethanopterin S-methyltransferase subunit B (108 aa).

Residues 77-99 (FQGMFFGFWVTMAVLVLVTILAV) form a helical membrane-spanning segment.

The protein belongs to the MtrB family. In terms of assembly, the complex is composed of 8 subunits; MtrA, MtrB, MtrC, MtrD, MtrE, MtrF, MtrG and MtrH.

It localises to the cell membrane. The enzyme catalyses 5-methyl-5,6,7,8-tetrahydromethanopterin + coenzyme M + 2 Na(+)(in) = 5,6,7,8-tetrahydromethanopterin + methyl-coenzyme M + 2 Na(+)(out). The protein operates within one-carbon metabolism; methanogenesis from CO(2); methyl-coenzyme M from 5,10-methylene-5,6,7,8-tetrahydromethanopterin: step 2/2. Its function is as follows. Part of a complex that catalyzes the formation of methyl-coenzyme M and tetrahydromethanopterin from coenzyme M and methyl-tetrahydromethanopterin. This is an energy-conserving, sodium-ion translocating step. This is Tetrahydromethanopterin S-methyltransferase subunit B from Methanococcus maripaludis (strain DSM 14266 / JCM 13030 / NBRC 101832 / S2 / LL).